We begin with the raw amino-acid sequence, 1158 residues long: ATP-dependent helicase/deoxyribonuclease subunit B (1158 aa).

Residues 1–275 form the UvrD-like helicase ATP-binding domain; it reads MTLHAYLGRA…QYFNQLYRFN (275 aa). ATP is bound at residue 8–15; that stretch reads GRAGTGKS. Positions 269 to 583 constitute a UvrD-like helicase C-terminal domain; the sequence is NQLYRFNNQD…SIGTMDLAKV (315 aa). 4 residues coordinate [4Fe-4S] cluster: Cys784, Cys1112, Cys1115, and Cys1121.

The protein belongs to the helicase family. AddB/RexB type 1 subfamily. Heterodimer of AddA and AddB. It depends on Mg(2+) as a cofactor. Requires [4Fe-4S] cluster as cofactor.

Functionally, the heterodimer acts as both an ATP-dependent DNA helicase and an ATP-dependent, dual-direction single-stranded exonuclease. Recognizes the chi site generating a DNA molecule suitable for the initiation of homologous recombination. The AddB subunit has 5' -&gt; 3' nuclease activity but not helicase activity. In Staphylococcus aureus (strain MSSA476), this protein is ATP-dependent helicase/deoxyribonuclease subunit B.